The chain runs to 363 residues: Apelin receptor B (363 aa).

Residues 1 to 38 are Extracellular-facing; that stretch reads MESEGFSATTEQYEYYDYANETGLQPCDETDWDFSYSL. Asparagine 20 is a glycosylation site (N-linked (GlcNAc...) asparagine). 2 disulfide bridges follow: cysteine 27/cysteine 287 and cysteine 109/cysteine 186. A helical transmembrane segment spans residues 39–59; that stretch reads LPVFYMIVFVLGLSGNGVVIF. The Cytoplasmic segment spans residues 60 to 77; it reads TVWKAKPKRRSADTYIGN. The chain crosses the membrane as a helical span at residues 78-98; the sequence is LALADLAFVVTLPLWATYTAL. At 99–111 the chain is on the extracellular side; it reads GFHWPFGSALCKL. The chain crosses the membrane as a helical span at residues 112–132; that stretch reads SSYLVLLNMFASVFCLTCLSF. Residues 133–152 are Cytoplasmic-facing; the sequence is DRYLAIVHSLSSAKLRSRSS. A helical membrane pass occupies residues 153 to 173; sequence ILVSLAVIWLFSGLLALPSLI. Residues 174–200 lie on the Extracellular side of the membrane; the sequence is LRDTRVEGNNTICDLDFSGVSSKENEN. N-linked (GlcNAc...) asparagine glycosylation occurs at asparagine 182. Residues 201–221 traverse the membrane as a helical segment; that stretch reads FWIGGLSILTTVPGFLLPLLL. The Cytoplasmic segment spans residues 222 to 249; it reads MTIFYCFIGGKVTMHFQNLKKEEQKKKR. Residues 250–270 traverse the membrane as a helical segment; the sequence is LLKIIITLVVVFAICWLPFHI. Residues 271–297 are Extracellular-facing; the sequence is LKTIHFLDLMGFLELSCSAQNIIVSLH. The chain crosses the membrane as a helical span at residues 298–318; sequence PYATCLAYVNSCLNPFLYAFF. The Cytoplasmic segment spans residues 319–363; that stretch reads DLRFRSQCFFFFGFKKVLQGHLSNTSSSLSAQTQKSEIHSLATKV.

Belongs to the G-protein coupled receptor 1 family. In terms of tissue distribution, expressed in all blood vessels including the posterior cardinal vein, intersomitic veins and the vitelline vein network.

The protein localises to the cell membrane. In terms of biological role, g protein-coupled receptor for peptide hormones apelin (apln) and apelin receptor early endogenous ligand (apela), that plays a role in the regulation of normal cardiovascular function and fluid homeostasis. When acting as apelin receptor, activates both G(i) protein pathway that inhibits adenylate cyclase activity, and the beta-arrestin pathway that promotes internalization of the receptor. Also functions as mechanoreceptor that is activated by pathological stimuli in a G-protein-independent fashion to induce beta-arrestin signaling, hence eliciting cardiac hypertrophy. However, the presence of apelin ligand blunts cardiac hypertrophic induction from APLNR/APJ on response to pathological stimuli. Plays a key role in early development such as gastrulation, blood vessels formation and heart morphogenesis by acting as a receptor for apela hormone, promoting endoderm and mesendoderm cell migration and regulating the migration of cells fated to become myocardial progenitors, respectively. Promotes angioblast migration toward the embryonic midline, i.e. the position of the future vessel formation, during vasculogenesis. May promote sinus venosus (SV)-derived endothelial cells migration into the developing heart to promote coronary blood vessel development. Required for cardiovascular development, particularly for intersomitic vein angiogenesis by acting as a receptor for apln hormone. Also plays a role in various processes in adults such as regulation of blood vessel formation, blood pressure, heart contractility, and heart failure. Acts upstream of the i/o type of G-alpha proteins in the differentiation of endothelium, erythroid cells, myeloid cells and cardiomyocytes. The polypeptide is Apelin receptor B (aplnr-b) (Xenopus laevis (African clawed frog)).